Consider the following 84-residue polypeptide: Large ribosomal subunit protein bL27 (84 aa).

The tract at residues 1–23 is disordered; that stretch reads MAHKKGASSSRNGRESAAQRLGV.

This sequence belongs to the bacterial ribosomal protein bL27 family.

This chain is Large ribosomal subunit protein bL27, found in Salinispora arenicola (strain CNS-205).